A 696-amino-acid chain; its full sequence is PWWP domain-containing DNA repair factor 3B (696 aa).

Polar residues-rich tracts occupy residues 119–128 (QNVPQKQSDS) and 290–300 (CLDTSQNQPSM). 2 disordered regions span residues 119 to 143 (QNVP…DLPG) and 278 to 303 (NIED…MESE). Ser-128 is subject to Phosphoserine. A PWWP domain is found at 392–453 (TGMIVWFKYQ…KKFDCKEKQM (62 aa)).

The protein belongs to the PWWP3A family.

The polypeptide is PWWP domain-containing DNA repair factor 3B (Homo sapiens (Human)).